Here is a 497-residue protein sequence, read N- to C-terminus: Putative aldehyde dehydrogenase AldA (497 aa).

213-219 (GKGSESG) is a binding site for NAD(+). Residues E257 and C291 contribute to the active site.

It belongs to the aldehyde dehydrogenase family.

The enzyme catalyses an aldehyde + NAD(+) + H2O = a carboxylate + NADH + 2 H(+). This Staphylococcus haemolyticus (strain JCSC1435) protein is Putative aldehyde dehydrogenase AldA (aldA).